Consider the following 88-residue polypeptide: UPF0297 protein SSA_2241 (88 aa).

It belongs to the UPF0297 family.

The protein is UPF0297 protein SSA_2241 of Streptococcus sanguinis (strain SK36).